Reading from the N-terminus, the 370-residue chain is Alanine racemase (370 aa).

Lys-39 serves as the catalytic Proton acceptor; specific for D-alanine. Residue Lys-39 is modified to N6-(pyridoxal phosphate)lysine. Arg-137 is a binding site for substrate. Tyr-258 acts as the Proton acceptor; specific for L-alanine in catalysis. Met-306 contacts substrate.

Belongs to the alanine racemase family. Pyridoxal 5'-phosphate is required as a cofactor.

It catalyses the reaction L-alanine = D-alanine. Its pathway is amino-acid biosynthesis; D-alanine biosynthesis; D-alanine from L-alanine: step 1/1. Its function is as follows. Catalyzes the interconversion of L-alanine and D-alanine. May also act on other amino acids. The chain is Alanine racemase (alr) from Methylobacterium nodulans (strain LMG 21967 / CNCM I-2342 / ORS 2060).